Here is a 255-residue protein sequence, read N- to C-terminus: tRNA (guanine-N(7)-)-methyltransferase (255 aa).

The interval 1-37 (MTAAASDPHNPRSSADDTASPRCESGQGSFFGRRKGH) is disordered. S-adenosyl-L-methionine contacts are provided by Glu-80, Glu-105, Asp-132, and Asp-154. Asp-154 is an active-site residue. 2 residues coordinate substrate: Lys-158 and Asp-190.

The protein belongs to the class I-like SAM-binding methyltransferase superfamily. TrmB family.

It catalyses the reaction guanosine(46) in tRNA + S-adenosyl-L-methionine = N(7)-methylguanosine(46) in tRNA + S-adenosyl-L-homocysteine. It functions in the pathway tRNA modification; N(7)-methylguanine-tRNA biosynthesis. Catalyzes the formation of N(7)-methylguanine at position 46 (m7G46) in tRNA. This chain is tRNA (guanine-N(7)-)-methyltransferase, found in Nitrobacter hamburgensis (strain DSM 10229 / NCIMB 13809 / X14).